A 403-amino-acid chain; its full sequence is Serine/threonine transporter SstT (403 aa).

A run of 10 helical transmembrane segments spans residues 15–35 (LGLIPQIVIGIALGVGVAIVW), 49–69 (FISALKAVAPILVFLLVMTAI), 85–105 (LLYVVGTLCAALVAVLASFIF), 142–162 (ALLNANFVGILAWAMGLGMML), 183–203 (IVQLVIRCAPLGIFGLVAGTL), 218–238 (LAVIVGCMLFVALVTNPLIVF), 246–268 (YPLVFACLRGSAITAFFTRSSAA), 289–309 (ISIPLGATINMAGAAVTISVI), 317–337 (LGIGVDFATALLLCVVASLAA), and 362–382 (PDVAMQVVAIGFVISVVQDAT).

This sequence belongs to the dicarboxylate/amino acid:cation symporter (DAACS) (TC 2.A.23) family.

It localises to the cell inner membrane. It catalyses the reaction L-serine(in) + Na(+)(in) = L-serine(out) + Na(+)(out). The catalysed reaction is L-threonine(in) + Na(+)(in) = L-threonine(out) + Na(+)(out). Functionally, involved in the import of serine and threonine into the cell, with the concomitant import of sodium (symport system). The polypeptide is Serine/threonine transporter SstT (Chromohalobacter salexigens (strain ATCC BAA-138 / DSM 3043 / CIP 106854 / NCIMB 13768 / 1H11)).